Reading from the N-terminus, the 206-residue chain is MNESGRVEAFSDGVFAIAITLLILDIKVPKADGPGGLWHALGAQWPSYAAYVVSFLVIGIMWVNHHQVFSYVARVDRALMFLNLLVLMVVAAVPWPTAMLAEYLREDRASHVAAAVYSLVMVAMALAFQALWWHLTRTGHLFDPRVDAPAARATRIRFALGSLGYPLTVGLAFVSAPLTLAAHGLLALYYGFNQVPVPTREAAAPS.

A topological domain (cytoplasmic) is located at residue Met1. Residues Asn2 to Asp25 traverse the membrane as a helical segment. The short motif at Arg6–Asp12 is the RxxxFSD motif element. At Ile26 to Gln44 the chain is on the extracellular side. Positions Ala31–Pro34 are short helix H1. Residues Gly36–Gly42 are short helix H2. A helical transmembrane segment spans residues Trp45–Ser70. At Tyr71–Asp76 the chain is on the cytoplasmic side. Residues Arg77–Glu102 form a helical membrane-spanning segment. The Extracellular portion of the chain corresponds to Tyr103–Ser110. A helical membrane pass occupies residues His111–Leu135. The Cytoplasmic segment spans residues Thr136–Asp147. A helical transmembrane segment spans residues Ala148–Val174. The Extracellular portion of the chain corresponds to Ser175–Ala176. The chain crosses the membrane as a helical span at residues Pro177 to Phe192. The Cytoplasmic segment spans residues Asn193–Ser206.

Belongs to the TMEM175 family. As to quaternary structure, homotetramer.

The protein resides in the membrane. The catalysed reaction is K(+)(in) = K(+)(out). Its function is as follows. Potassium channel. The chain is Potassium channel B446_29190 from Streptomyces collinus (strain DSM 40733 / Tue 365).